The chain runs to 225 residues: Leucyl/phenylalanyl-tRNA--protein transferase (225 aa).

Belongs to the L/F-transferase family.

The protein resides in the cytoplasm. The enzyme catalyses N-terminal L-lysyl-[protein] + L-leucyl-tRNA(Leu) = N-terminal L-leucyl-L-lysyl-[protein] + tRNA(Leu) + H(+). It carries out the reaction N-terminal L-arginyl-[protein] + L-leucyl-tRNA(Leu) = N-terminal L-leucyl-L-arginyl-[protein] + tRNA(Leu) + H(+). It catalyses the reaction L-phenylalanyl-tRNA(Phe) + an N-terminal L-alpha-aminoacyl-[protein] = an N-terminal L-phenylalanyl-L-alpha-aminoacyl-[protein] + tRNA(Phe). In terms of biological role, functions in the N-end rule pathway of protein degradation where it conjugates Leu, Phe and, less efficiently, Met from aminoacyl-tRNAs to the N-termini of proteins containing an N-terminal arginine or lysine. This is Leucyl/phenylalanyl-tRNA--protein transferase from Nitrobacter winogradskyi (strain ATCC 25391 / DSM 10237 / CIP 104748 / NCIMB 11846 / Nb-255).